The following is a 143-amino-acid chain: Ninjurin-2 (143 aa).

The Extracellular segment spans residues 1–61 (MESDRETIHL…KSVLQQGPFA (61 aa)). Residues 26 to 38 (NFYATKKSVAESM) are helix alpha1. The interval 39-58 (LDVALFMSNAMRLKSVLQQG) is helix alpha2. A helical membrane pass occupies residues 62–93 (EYYTTLVTLIIVSLLLQVVISLLLVFIAILNL). Residues 94 to 97 (NEVE) are Cytoplasmic-facing. Residues 98 to 127 (NQRHLNKLNNAATILVFITVVINIFITAFG) form a helical membrane-spanning segment. Lys-104 serves as a coordination point for cholesterol. The Extracellular segment spans residues 128–143 (AHHAASMAARTSSNPI).

The protein belongs to the ninjurin family. In terms of assembly, homooligomer; in response to stimuli, homooligomerizes into filaments. In contrast to NINJ1, the filament is curved toward the intracellular space, preventing its circularization on a relatively flat membrane to mediate plasma membrane rupture: curvature is caused by cholesterol-binding at the cytoplasmic leaflet.

Its subcellular location is the cell membrane. In terms of biological role, its role in unclear. In contrast to NINJ1 paralog, does not mediate plasma membrane rupture (cytolysis) downstream of necroptotic and pyroptotic programmed cell death. While it is able to oligomerize and form filaments, filaments are curved toward the intracellular space, preventing circularization to mediate plasma membrane rupture. May act as a homophilic transmembrane adhesion molecule involved in nerve regeneration. Promotes axonal growth. This Mus musculus (Mouse) protein is Ninjurin-2 (Ninj2).